The primary structure comprises 486 residues: Glutamyl-tRNA(Gln) amidotransferase subunit A (486 aa).

Residues lysine 78 and serine 153 each act as charge relay system in the active site. The active-site Acyl-ester intermediate is serine 177.

The protein belongs to the amidase family. GatA subfamily. In terms of assembly, heterotrimer of A, B and C subunits.

It catalyses the reaction L-glutamyl-tRNA(Gln) + L-glutamine + ATP + H2O = L-glutaminyl-tRNA(Gln) + L-glutamate + ADP + phosphate + H(+). Functionally, allows the formation of correctly charged Gln-tRNA(Gln) through the transamidation of misacylated Glu-tRNA(Gln) in organisms which lack glutaminyl-tRNA synthetase. The reaction takes place in the presence of glutamine and ATP through an activated gamma-phospho-Glu-tRNA(Gln). The polypeptide is Glutamyl-tRNA(Gln) amidotransferase subunit A (Syntrophobacter fumaroxidans (strain DSM 10017 / MPOB)).